The primary structure comprises 177 residues: Large ribosomal subunit protein uL6 (177 aa).

Belongs to the universal ribosomal protein uL6 family. As to quaternary structure, part of the 50S ribosomal subunit.

This protein binds to the 23S rRNA, and is important in its secondary structure. It is located near the subunit interface in the base of the L7/L12 stalk, and near the tRNA binding site of the peptidyltransferase center. The protein is Large ribosomal subunit protein uL6 of Hydrogenovibrio crunogenus (strain DSM 25203 / XCL-2) (Thiomicrospira crunogena).